The following is a 216-amino-acid chain: Thiamine-phosphate synthase (216 aa).

Residues 35–39 and Asn-67 contribute to the 4-amino-2-methyl-5-(diphosphooxymethyl)pyrimidine site; that span reads QLRDK. Positions 68 and 87 each coordinate Mg(2+). Ser-106 is a binding site for 4-amino-2-methyl-5-(diphosphooxymethyl)pyrimidine. 132–134 lines the 2-[(2R,5Z)-2-carboxy-4-methylthiazol-5(2H)-ylidene]ethyl phosphate pocket; the sequence is TSS. Lys-135 serves as a coordination point for 4-amino-2-methyl-5-(diphosphooxymethyl)pyrimidine. 2-[(2R,5Z)-2-carboxy-4-methylthiazol-5(2H)-ylidene]ethyl phosphate is bound by residues Gly-163 and 183–184; that span reads IS.

The protein belongs to the thiamine-phosphate synthase family. Requires Mg(2+) as cofactor.

The catalysed reaction is 2-[(2R,5Z)-2-carboxy-4-methylthiazol-5(2H)-ylidene]ethyl phosphate + 4-amino-2-methyl-5-(diphosphooxymethyl)pyrimidine + 2 H(+) = thiamine phosphate + CO2 + diphosphate. The enzyme catalyses 2-(2-carboxy-4-methylthiazol-5-yl)ethyl phosphate + 4-amino-2-methyl-5-(diphosphooxymethyl)pyrimidine + 2 H(+) = thiamine phosphate + CO2 + diphosphate. It carries out the reaction 4-methyl-5-(2-phosphooxyethyl)-thiazole + 4-amino-2-methyl-5-(diphosphooxymethyl)pyrimidine + H(+) = thiamine phosphate + diphosphate. The protein operates within cofactor biosynthesis; thiamine diphosphate biosynthesis; thiamine phosphate from 4-amino-2-methyl-5-diphosphomethylpyrimidine and 4-methyl-5-(2-phosphoethyl)-thiazole: step 1/1. Functionally, condenses 4-methyl-5-(beta-hydroxyethyl)thiazole monophosphate (THZ-P) and 2-methyl-4-amino-5-hydroxymethyl pyrimidine pyrophosphate (HMP-PP) to form thiamine monophosphate (TMP). This is Thiamine-phosphate synthase from Methanoregula boonei (strain DSM 21154 / JCM 14090 / 6A8).